Reading from the N-terminus, the 213-residue chain is TVP38/TMEM64 family membrane protein YtxB (213 aa).

A run of 6 helical transmembrane segments spans residues 9 to 29 (WLAV…YLNV), 34 to 54 (IRVW…GISI), 58 to 78 (LVLF…GPLL), 81 to 101 (LYTL…AGLF), 159 to 179 (AVGI…FLAG), and 181 to 201 (LPAF…PFIF).

The protein belongs to the TVP38/TMEM64 family.

The protein resides in the cell membrane. This is TVP38/TMEM64 family membrane protein YtxB (ytxB) from Bacillus subtilis (strain 168).